The sequence spans 237 residues: Uridylate kinase (237 aa).

K12 to G15 is an ATP binding site. The segment at G20–G25 is involved in allosteric activation by GTP. G54 lines the UMP pocket. Positions 55 and 59 each coordinate ATP. UMP-binding positions include D74 and T135–T142. Residues T162, Y168, and D171 each contribute to the ATP site.

It belongs to the UMP kinase family. As to quaternary structure, homohexamer.

The protein localises to the cytoplasm. It catalyses the reaction UMP + ATP = UDP + ADP. Its pathway is pyrimidine metabolism; CTP biosynthesis via de novo pathway; UDP from UMP (UMPK route): step 1/1. With respect to regulation, allosterically activated by GTP. Inhibited by UTP. Its function is as follows. Catalyzes the reversible phosphorylation of UMP to UDP. The sequence is that of Uridylate kinase from Haemophilus influenzae (strain PittGG).